A 342-amino-acid polypeptide reads, in one-letter code: UDP-3-O-acylglucosamine N-acyltransferase (342 aa).

His241 functions as the Proton acceptor in the catalytic mechanism.

This sequence belongs to the transferase hexapeptide repeat family. LpxD subfamily. Homotrimer.

The enzyme catalyses a UDP-3-O-[(3R)-3-hydroxyacyl]-alpha-D-glucosamine + a (3R)-hydroxyacyl-[ACP] = a UDP-2-N,3-O-bis[(3R)-3-hydroxyacyl]-alpha-D-glucosamine + holo-[ACP] + H(+). It participates in bacterial outer membrane biogenesis; LPS lipid A biosynthesis. In terms of biological role, catalyzes the N-acylation of UDP-3-O-acylglucosamine using 3-hydroxyacyl-ACP as the acyl donor. Is involved in the biosynthesis of lipid A, a phosphorylated glycolipid that anchors the lipopolysaccharide to the outer membrane of the cell. The protein is UDP-3-O-acylglucosamine N-acyltransferase of Pasteurella multocida (strain Pm70).